Consider the following 461-residue polypeptide: MSNKKELLWASRFNEPFDSEALRFSSSVHVDGKLYREDIQGSIAHATMLGEEGIISADDAHAICRGLKEIEKEIETGTLVPQWEDEDIHTVIENRLKEKIGAAAGKLHSGRSRNDQVATDTRLYMRERIEELQEALNDLLGTLVQKAETYKDSIIFGYTHLQRAQPISAGHYYLAYFNMFNRDTERLLDLLMRVNVSPLGAAAFAGSTLPLNAGRTAELLDFSELFTNSIDAVSDRDILIEFISCCSIVMMHLSRFCEDIILWSSYEFGYLEISDAFSTGSSIMPQKKNADIAELIRGKTGRVYGDLMAMLTIMKGLPLSYNRDMQEDKPPLFDSAETAISSVTLFNRMLQHTRLREERLKELTKKDLSLATEIAEYLVKKDVPFRDAHRITGKIVSWSIENQTPLPDIPLERFREFSEVFDEGIFTALTPEASITSKKSHGSCSFESVERQIREARELLG.

It belongs to the lyase 1 family. Argininosuccinate lyase subfamily.

It localises to the cytoplasm. The catalysed reaction is 2-(N(omega)-L-arginino)succinate = fumarate + L-arginine. It participates in amino-acid biosynthesis; L-arginine biosynthesis; L-arginine from L-ornithine and carbamoyl phosphate: step 3/3. The chain is Argininosuccinate lyase from Chlorobium luteolum (strain DSM 273 / BCRC 81028 / 2530) (Pelodictyon luteolum).